Reading from the N-terminus, the 250-residue chain is Type III pantothenate kinase (250 aa).

An ATP-binding site is contributed by 6 to 13 (DVGNTNTV). Position 103 to 106 (103 to 106 (GADR)) interacts with substrate. Asp-105 serves as the catalytic Proton acceptor. Asp-125 contributes to the K(+) binding site. Residue Thr-128 participates in ATP binding. Thr-180 lines the substrate pocket.

Belongs to the type III pantothenate kinase family. As to quaternary structure, homodimer. NH4(+) serves as cofactor. K(+) is required as a cofactor.

It is found in the cytoplasm. The enzyme catalyses (R)-pantothenate + ATP = (R)-4'-phosphopantothenate + ADP + H(+). Its pathway is cofactor biosynthesis; coenzyme A biosynthesis; CoA from (R)-pantothenate: step 1/5. Catalyzes the phosphorylation of pantothenate (Pan), the first step in CoA biosynthesis. The protein is Type III pantothenate kinase of Frankia alni (strain DSM 45986 / CECT 9034 / ACN14a).